Reading from the N-terminus, the 329-residue chain is Flotillin-like protein FloA (329 aa).

2 consecutive transmembrane segments (helical) span residues 4–24 and 26–46; these read IAFI…FAIV and VGLW…TLIG.

It belongs to the flotillin-like FloA family. Homooligomerizes.

It localises to the cell membrane. Its subcellular location is the membrane raft. Its function is as follows. Found in functional membrane microdomains (FMM) that may be equivalent to eukaryotic membrane rafts. FMMs are highly dynamic and increase in number as cells age. Flotillins are thought to be important factors in membrane fluidity. This is Flotillin-like protein FloA from Acetivibrio thermocellus (strain ATCC 27405 / DSM 1237 / JCM 9322 / NBRC 103400 / NCIMB 10682 / NRRL B-4536 / VPI 7372) (Clostridium thermocellum).